Consider the following 334-residue polypeptide: Phosphate acyltransferase (334 aa).

It belongs to the PlsX family. Homodimer. Probably interacts with PlsY.

It is found in the cytoplasm. It carries out the reaction a fatty acyl-[ACP] + phosphate = an acyl phosphate + holo-[ACP]. Its pathway is lipid metabolism; phospholipid metabolism. Catalyzes the reversible formation of acyl-phosphate (acyl-PO(4)) from acyl-[acyl-carrier-protein] (acyl-ACP). This enzyme utilizes acyl-ACP as fatty acyl donor, but not acyl-CoA. The protein is Phosphate acyltransferase of Mycoplasma capricolum subsp. capricolum (strain California kid / ATCC 27343 / NCTC 10154).